A 546-amino-acid polypeptide reads, in one-letter code: NADH-ubiquinone oxidoreductase chain 5 (546 aa).

Transmembrane regions (helical) follow at residues Met-1–Ala-21, Ile-31–Val-51, Val-52–Phe-72, Leu-82–Ala-102, Leu-112–Ala-132, Leu-135–Tyr-155, Val-175–Glu-195, Leu-198–Gly-218, Thr-237–Val-257, Glu-264–Thr-284, Val-291–Gly-310, Leu-321–Gly-341, Ala-358–Leu-378, Ile-387–Leu-407, Val-440–Gly-460, and Leu-468–Leu-488.

This sequence belongs to the complex I subunit 5 family.

The protein localises to the mitochondrion inner membrane. The enzyme catalyses a ubiquinone + NADH + 5 H(+)(in) = a ubiquinol + NAD(+) + 4 H(+)(out). Functionally, core subunit of the mitochondrial membrane respiratory chain NADH dehydrogenase (Complex I) that is believed to belong to the minimal assembly required for catalysis. Complex I functions in the transfer of electrons from NADH to the respiratory chain. The immediate electron acceptor for the enzyme is believed to be ubiquinone. This is NADH-ubiquinone oxidoreductase chain 5 (ND5) from Chlamydomonas reinhardtii (Chlamydomonas smithii).